A 268-amino-acid polypeptide reads, in one-letter code: Tetraspanin-5 (268 aa).

Topologically, residues 1 to 17 are cytoplasmic; the sequence is MSGKHYKGPEVSCCIKY. Residues 18–38 form a helical membrane-spanning segment; sequence FIFGFNVIFWFLGITFLGIGL. Residues 39–61 are Extracellular-facing; sequence WAWNEKGVLSNISSITDLGGFDP. Asn49 is a glycosylation site (N-linked (GlcNAc...) asparagine). Residues 62–82 form a helical membrane-spanning segment; it reads VWLFLVVGGVMFILGFAGCIG. Topologically, residues 83 to 92 are cytoplasmic; that stretch reads ALRENTFLLK. Residues 93-113 form a helical membrane-spanning segment; the sequence is FFSVFLGIIFFLELTAGVLAF. At 114 to 232 the chain is on the extracellular side; the sequence is VFKDWIKDQL…PQFEKWLQDN (119 aa). Intrachain disulfides connect Cys153/Cys221, Cys154/Cys186, Cys170/Cys180, and Cys187/Cys200. N-linked (GlcNAc...) asparagine glycans are attached at residues Asn169 and Asn174. N-linked (GlcNAc...) asparagine glycosylation is present at Asn232. Residues 233 to 253 form a helical membrane-spanning segment; that stretch reads LTIVAGIFIGIALLQIFGICL. Topologically, residues 254-268 are cytoplasmic; that stretch reads AQNLVSDIEAVRASW.

The protein belongs to the tetraspanin (TM4SF) family. In terms of assembly, interacts with ADAM10; the interaction influences ADAM10 substrate specificity, endocytosis and turnover. Palmitoylated.

It is found in the cell membrane. Functionally, part of TspanC8 subgroup, composed of 6 members that interact with the transmembrane metalloprotease ADAM10. This interaction is required for ADAM10 exit from the endoplasmic reticulum and for enzymatic maturation and trafficking to the cell surface as well as substrate specificity. Different TspanC8/ADAM10 complexes have distinct substrates. Promotes ADAM10-mediated cleavage of CD44. Seems to regulate VE-cadherin expression in endothelial cells probably through interaction with ADAM10, promoting leukocyte transmigration. This chain is Tetraspanin-5, found in Homo sapiens (Human).